Here is a 521-residue protein sequence, read N- to C-terminus: FAD-dependent monooxygenase DEP2 (521 aa).

The N-terminal stretch at 1–22 is a signal peptide; that stretch reads MHDSPPFKVIIVGAGVTGLTLA. FAD-binding residues include D36 and R109. Residues N139 and N220 are each glycosylated (N-linked (GlcNAc...) asparagine). FAD is bound by residues D310 and G323. The chain crosses the membrane as a helical span at residues 477–497; the sequence is ILVLWAGLWLAICFFHLVFSG. An N-linked (GlcNAc...) asparagine glycan is attached at N515.

Belongs to the paxM FAD-dependent monooxygenase family. FAD is required as a cofactor.

The protein localises to the membrane. The protein operates within polyketide biosynthesis. Part of the gene cluster that mediates the biosynthesis of depudecin, a highly oxidized eleven-carbon linear polyketide that acts as a histone deacetylase (HDAC) inhibitor and makes a small contribution to pathogenesis. The reducing polyketide synthase DEP5 is the central enzyme in depudecin biosynthesis by yielding the backbone polyketide chain. The monooxygenases DEP2 and DEP4, as well as the uncharacterized protein DEP1, then act as tailoring enzymes to modify the intermediate polyketide chain into depudecin. This is FAD-dependent monooxygenase DEP2 from Fusarium langsethiae.